The primary structure comprises 240 residues: U1 small nuclear ribonucleoprotein C (240 aa).

The Matrin-type zinc finger occupies 4-36 (YYCEYCDIYLTHSSPVGRRQHIQGRKHISAKIE). Disordered stretches follow at residues 86–122 (GMKH…SKYH) and 175–240 (IDSD…SVDA). Basic and acidic residues-rich tracts occupy residues 178 to 194 (DPVK…DNAI) and 203 to 219 (DQGD…HADH). Positions 226–240 (TDGTANGNDQVSVDA) are enriched in polar residues.

Belongs to the U1 small nuclear ribonucleoprotein C family. As to quaternary structure, U1 snRNP is composed of the 7 core Sm proteins B/B', D1, D2, D3, E, F and G that assemble in a heptameric protein ring on the Sm site of the small nuclear RNA to form the core snRNP, and at least 3 U1 snRNP-specific proteins U1-70K, U1-A and U1-C. U1-C interacts with U1 snRNA and the 5' splice-site region of the pre-mRNA.

The protein localises to the nucleus. In terms of biological role, component of the spliceosomal U1 snRNP, which is essential for recognition of the pre-mRNA 5' splice-site and the subsequent assembly of the spliceosome. U1-C is directly involved in initial 5' splice-site recognition for both constitutive and regulated alternative splicing. The interaction with the 5' splice-site seems to precede base-pairing between the pre-mRNA and the U1 snRNA. Stimulates commitment or early (E) complex formation by stabilizing the base pairing of the 5' end of the U1 snRNA and the 5' splice-site region. The sequence is that of U1 small nuclear ribonucleoprotein C from Plasmodium vivax (strain Salvador I).